The chain runs to 7260 residues: Nonribosomal peptide synthetase ecdA (7260 aa).

The 77-residue stretch at 4-80 (TNEMERKRVF…ELFETIQYLQ (77 aa)) folds into the Carrier 1 domain. Ser-41 bears the O-(pantetheine 4'-phosphoryl)serine mark. A condensation 1 region spans residues 134–549 (EDVYPSTPLQ…SINEILTLPA (416 aa)). The adenylation 1 stretch occupies residues 575–965 (QDQVRSQPAA…DGSLLYVGRC (391 aa)). Residues 1090 to 1166 (APSTAIEHKL…DLARELEGRN (77 aa)) enclose the Carrier 2 domain. Position 1127 is an O-(pantetheine 4'-phosphoryl)serine (Ser-1127). The interval 1208-1628 (EDIIPCTAMQ…LGDLSLLSAD (421 aa)) is condensation 2. An adenylation 2 region spans residues 1653-2054 (EEQITARPDS…GRRDTQIKIR (402 aa)). The Carrier 3 domain occupies 2188–2264 (TPSTPTESQL…DLANLLSSRF (77 aa)). An O-(pantetheine 4'-phosphoryl)serine modification is found at Ser-2225. The tract at residues 2314–2719 (QDVYPCTPLQ…THVVQQLCDP (406 aa)) is condensation 3. The tract at residues 2763–3156 (KQALAQPNAP…GRRDTQVKIR (394 aa)) is adenylation 3. Positions 3287–3365 (QPATEMEKML…ELAQVLEERV (79 aa)) constitute a Carrier 4 domain. Ser-3324 is subject to O-(pantetheine 4'-phosphoryl)serine. The condensation 4 stretch occupies residues 3417 to 3831 (VQDVYPCTPL…LLSPNDQQQI (415 aa)). The tract at residues 3851–4248 (EEQAMAHPTK…SFVYVARRNT (398 aa)) is adenylation 4. Positions 4394–4471 (APATAMERTL…DLANLLADGA (78 aa)) constitute a Carrier 5 domain. Ser-4431 is subject to O-(pantetheine 4'-phosphoryl)serine. The tract at residues 4510 to 4910 (EDIYPATPLQ…HFVHVAEQLF (401 aa)) is condensation 5. The segment at 4955 to 5357 (ERAALQPNAP…GRRDLQVKIR (403 aa)) is adenylation 5. Positions 5496–5573 (APRTVMEQQV…DLALVLSERG (78 aa)) constitute a Carrier 6 domain. At Ser-5533 the chain carries O-(pantetheine 4'-phosphoryl)serine. The condensation 6 stretch occupies residues 5622–6043 (EDVYPCTPLQ…AVSEKDERQI (422 aa)). The interval 6063-6460 (QEQVARTPGE…GRHDSQVKIR (398 aa)) is adenylation 6. The 77-residue stretch at 6592-6668 (APSTAMERQL…EVAQVVEDRV (77 aa)) folds into the Carrier 7 domain. At Ser-6629 the chain carries O-(pantetheine 4'-phosphoryl)serine. The segment at 6718–7133 (LPTTDFQALT…ILDSPGLLVS (416 aa)) is condensation 7. Residues 7241–7260 (CEEAEKSASVTSSERRLATI) form a disordered region.

It belongs to the NRP synthetase family.

It functions in the pathway antifungal biosynthesis. In terms of biological role, nonribosomal peptide synthetase; part of the gene cluster that mediates the biosynthesis of echinocandin B, a fungal lipidated cyclic hexapeptide that acts as an antifungal agent. Linoleoyl-AMP, produced by the fatty-acyl-AMP ligase ecdI, is transferred to the initiation carrier domain (T0) of ecdA. The linoleoyl-S-phosphopantetheinyl-T0 is sequentially extended with L-ornithine, L-threonine, L-proline, L-homotyrosine, L-threonine, and 4R-methyl-L-proline to form the linear hexapeptide. Thereafter, the terminal condensation (C7) performs macrocyclization of the NRPS product and the cyclic scaffold is released from ecdA. All six of the amino acid residues are hydroxylated, including 4R,5R-dihydroxy-L-ornithine, 4R-hydroxyl-L-proline, 3S,4S-dihydroxy-L-homotyrosine, and 3S-hydroxyl-4S-methyl-L-prolin. In the pathway, all the hydroxylation reactions are proposed to occur following completion of the cyclic peptide, so the unhydroxylated precursor produced by ecdA will undergo six rounds of hydroxylation. Five hydroxylase genes (ecdG, ecdH, ecdK, htyE and htyF) are embedded within the echinocandin B (ecd) and L-homotyrosine (hty) clusters. This is Nonribosomal peptide synthetase ecdA from Aspergillus rugulosus (Emericella rugulosa).